The primary structure comprises 362 residues: Serine/threonine-protein phosphatase 2A activator 1 (362 aa).

Over residues 1-10 the composition is skewed to pro residues; the sequence is MQPHTQPPQP. Disordered regions lie at residues 1–28 and 339–362; these read MQPH…APPR and NVEE…PWAR. Over residues 340–351 the composition is skewed to basic and acidic residues; that stretch reads VEERGDKNEGKG.

The protein belongs to the PTPA-type PPIase family.

The protein resides in the cytoplasm. Its subcellular location is the nucleus. It catalyses the reaction [protein]-peptidylproline (omega=180) = [protein]-peptidylproline (omega=0). Its function is as follows. PPIases accelerate the folding of proteins. It catalyzes the cis-trans isomerization of proline imidic peptide bonds in oligopeptides. Acts as a regulatory subunit for PP2A-like phosphatases modulating their activity or substrate specificity, probably by inducing a conformational change in the catalytic subunit, a direct target of the PPIase. Can reactivate inactive phosphatase PP2A-phosphatase methylesterase complexes (PP2Ai) in presence of ATP and Mg(2+) by dissociating the inactive form from the complex. The sequence is that of Serine/threonine-protein phosphatase 2A activator 1 (RRD1) from Cryptococcus neoformans var. neoformans serotype D (strain B-3501A) (Filobasidiella neoformans).